The chain runs to 304 residues: Acetyl-coenzyme A carboxylase carboxyl transferase subunit beta (304 aa).

A CoA carboxyltransferase N-terminal domain is found at 29 to 298 (LWSKCESCGA…ASDVSPAAVP (270 aa)). Zn(2+) is bound by residues Cys33, Cys36, Cys52, and Cys55. The segment at 33–55 (CESCGALTYTKDLRANQMVCLEC) adopts a C4-type zinc-finger fold.

This sequence belongs to the AccD/PCCB family. As to quaternary structure, acetyl-CoA carboxylase is a heterohexamer composed of biotin carboxyl carrier protein (AccB), biotin carboxylase (AccC) and two subunits each of ACCase subunit alpha (AccA) and ACCase subunit beta (AccD). Zn(2+) serves as cofactor.

The protein resides in the cytoplasm. The catalysed reaction is N(6)-carboxybiotinyl-L-lysyl-[protein] + acetyl-CoA = N(6)-biotinyl-L-lysyl-[protein] + malonyl-CoA. It functions in the pathway lipid metabolism; malonyl-CoA biosynthesis; malonyl-CoA from acetyl-CoA: step 1/1. In terms of biological role, component of the acetyl coenzyme A carboxylase (ACC) complex. Biotin carboxylase (BC) catalyzes the carboxylation of biotin on its carrier protein (BCCP) and then the CO(2) group is transferred by the transcarboxylase to acetyl-CoA to form malonyl-CoA. The polypeptide is Acetyl-coenzyme A carboxylase carboxyl transferase subunit beta (Acaryochloris marina (strain MBIC 11017)).